The primary structure comprises 100 residues: NADH-quinone oxidoreductase subunit K (100 aa).

Helical transmembrane passes span 4–24 (TSYYVLLSAILFTIGVLGVLL), 29–49 (IVIFMSVELMLNAANLALVAF), and 61–81 (IVFFVITVAAAEVAVGLALLV).

This sequence belongs to the complex I subunit 4L family. As to quaternary structure, NDH-1 is composed of 14 different subunits. Subunits NuoA, H, J, K, L, M, N constitute the membrane sector of the complex.

Its subcellular location is the cell membrane. The catalysed reaction is a quinone + NADH + 5 H(+)(in) = a quinol + NAD(+) + 4 H(+)(out). NDH-1 shuttles electrons from NADH, via FMN and iron-sulfur (Fe-S) centers, to quinones in the respiratory chain. The immediate electron acceptor for the enzyme in this species is believed to be ubiquinone. Couples the redox reaction to proton translocation (for every two electrons transferred, four hydrogen ions are translocated across the cytoplasmic membrane), and thus conserves the redox energy in a proton gradient. The chain is NADH-quinone oxidoreductase subunit K from Chloroflexus aggregans (strain MD-66 / DSM 9485).